We begin with the raw amino-acid sequence, 156 residues long: Transcription elongation factor GreA (156 aa).

Positions 1–32 form a coiled coil; the sequence is MKKVRLTREGYEKLKQELEELKRKFMYEISER.

Belongs to the GreA/GreB family.

Necessary for efficient RNA polymerase transcription elongation past template-encoded arresting sites. The arresting sites in DNA have the property of trapping a certain fraction of elongating RNA polymerases that pass through, resulting in locked ternary complexes. Cleavage of the nascent transcript by cleavage factors such as GreA or GreB allows the resumption of elongation from the new 3'terminus. GreA releases sequences of 2 to 3 nucleotides. The polypeptide is Transcription elongation factor GreA (Thermotoga neapolitana (strain ATCC 49049 / DSM 4359 / NBRC 107923 / NS-E)).